The following is a 261-amino-acid chain: MIPMFKKKPLIGMVHLKPLPGSYHYNDNFDDIVDFAIKEAKKLEEAGFDAVMIENFGDAPFKKEADKITIASMAVIAKAIKEEVSLPLGINILRNDAIGAYSIAYVVKADFIRVNVLSGVAFTDQGIIEGKAYELAKLKKLLPSKIKVFADVHVKHAYHFIDFESSLLDTVERGLADAVIISGKRTGKEVDIEKLKLAKELVDVPVIVGSGTNYNNLRILWSYADGFIIGTWIKKDGKANNEIDIDRAKKIVNLANKLKMC.

The protein belongs to the BtpA family.

This is an uncharacterized protein from Methanocaldococcus jannaschii (strain ATCC 43067 / DSM 2661 / JAL-1 / JCM 10045 / NBRC 100440) (Methanococcus jannaschii).